Here is an 840-residue protein sequence, read N- to C-terminus: MKFCLYCCHCYIVICGKATHYYKSSKATSNLKSSNRVLMRNPMSPSEQHSQHNSTLAASPFVSNVSAARTQQSLPTDAQNDRLQQPWNRTNTATSPYQSLANSPLIQKLQANIMTPHQPSANSNSNSNSITGNVVNDNNLLASMSKNSMFGSTIPSTLRKVSLQREYKDSVDGVVRDEDNDEDVHNNGDAAANANNDRESKLGHNGPLTTTTLTTTTTATQLDVSELSAIERLRLWRFDALMQHMYRTAEYIADKVYNISNDPDDAFWLGQVYYNNNQYVRAVELITRNNLDGVNILCRYLLGLSFVKLQRFDDALDVIGEYNPFSEDPSTTAANTMSNNGNNSNTSQPVTDGGIKMESSLCFLRGKIYFAQNNFNKARDAFREAILVDIKNFEAFEMLLSKNLLTPQEEWDLFDSLDFKEFGEDKEIMKNLYKINLSKYINTEDITKSNEILAKDYKLADNVDVVRSKVDICYTQCKFNECLELCETVLENDEFNTNILPAYIGCLYELSNKNKLFLLSHRLAETFPKSAITWFSVATYYMSLDRISEAQKYYSKSSILDPSFAAAWLGFAHTYALEGEQDQALTAYSTASRFFPGMHLPKLFLGMQFMAMNSLNLAESYFVLAYDICPNDPLVLNEMGVMYFKKNEFVKAKKYLKKALEVVKDLDPSSRTTISIQLNLGHTYRKLNENEIAIKCFRCVLEKNDKNSEIHCSLGYLYLKTKKLQKAIDHLHKSLYLKPNNSSATALLKNALELNVTLSLDASHPLIDKSNLMSQASKDKASLNKKRSSLTYDPVNMAKRLRTQKEIFDQNNKALRKGGHDSKTGSNNADDDFDADMELE.

Disordered regions lie at residues 67 to 97 (AARTQQSLPTDAQNDRLQQPWNRTNTATSPY) and 173 to 212 (GVVRDEDNDEDVHNNGDAAANANNDRESKLGHNGPLTTTT). TPR repeat units follow at residues 229–260 (AIERLRLWRFDALMQHMYRTAEYIADKVYNIS), 263–288 (PDDAFWLGQVYYNNNQYVRAVELITR), and 296–319 (ILCRYLLGLSFVKLQRFDDALDVI). Positions 329-350 (PSTTAANTMSNNGNNSNTSQPV) are disordered. Residues 330–347 (STTAANTMSNNGNNSNTS) show a composition bias toward low complexity. 11 TPR repeats span residues 357-388 (MESSLCFLRGKIYFAQNNFNKARDAFREAILV), 393-416 (FEAFEMLLSKNLLTPQEEWDLFDS), 426-454 (KEIMKNLYKINLSKYINTEDITKSNEILA), 464-492 (DVVRSKVDICYTQCKFNECLELCETVLEN), 499-526 (ILPAYIGCLYELSNKNKLFLLSHRLAET), 531-560 (AITWFSVATYYMSLDRISEAQKYYSKSSIL), 565-593 (AAAWLGFAHTYALEGEQDQALTAYSTASR), 600-628 (LPKLFLGMQFMAMNSLNLAESYFVLAYDI), 633-665 (PLVLNEMGVMYFKKNEFVKAKKYLKKALEVVKD), 671-703 (RTTISIQLNLGHTYRKLNENEIAIKCFRCVLEK), and 708-737 (SEIHCSLGYLYLKTKKLQKAIDHLHKSLYL). Positions 802 to 840 (RTQKEIFDQNNKALRKGGHDSKTGSNNADDDFDADMELE) are disordered. Residues 829-840 (ADDDFDADMELE) are compositionally biased toward acidic residues.

Belongs to the APC6/CDC16 family. In terms of assembly, the APC/C is composed of at least 13 subunits that stay tightly associated throughout the cell cycle: APC1, APC2, APC4, APC5, APC9, APC11, CDC16, CDC23, CDC26, CDC27, DOC1, MND2 and SWM1. Interacts with AMA1. Post-translationally, phosphorylated by CDC28, which is required for the early mitotic activity of the APC/C in its CDC20-bound form.

The protein resides in the nucleus. It participates in protein modification; protein ubiquitination. Its function is as follows. Component of the anaphase promoting complex/cyclosome (APC/C), a cell cycle-regulated E3 ubiquitin-protein ligase complex that controls progression through mitosis and the G1 phase of the cell cycle. The APC/C is thought to confer substrate specificity and, in the presence of ubiquitin-conjugating E2 enzymes, it catalyzes the formation of protein-ubiquitin conjugates that are subsequently degraded by the 26S proteasome. In early mitosis, the APC/C is activated by CDC20 and targets securin PDS1, the B-type cyclin CLB5, and other anaphase inhibitory proteins for proteolysis, thereby triggering the separation of sister chromatids at the metaphase-to-anaphase transition. In late mitosis and in G1, degradation of CLB5 allows activation of the APC/C by CDH1, which is needed to destroy CDC20 and the B-type cyclin CLB2 to allow exit from mitosis and creating the low CDK state necessary for cytokinesis and for reforming prereplicative complexes in G1 prior to another round of replication. This chain is Anaphase-promoting complex subunit CDC16 (CDC16), found in Saccharomyces cerevisiae (strain ATCC 204508 / S288c) (Baker's yeast).